The following is a 265-amino-acid chain: Putative 2-amino-3,7-dideoxy-D-threo-hept-6-ulosonate synthase 2 (265 aa).

The Proton acceptor role is filled by Asp27. Residues 27 to 31 (DHGVS) and 147 to 149 (YPR) each bind 1-deoxy-D-threo-hexo-2,5-diulose 6-phosphate. The active-site Proton donor is the Tyr147. The active-site Schiff-base intermediate with substrate is Lys177. 1-deoxy-D-threo-hexo-2,5-diulose 6-phosphate contacts are provided by residues 202–203 (GG) and 230–231 (GR).

It belongs to the DeoC/FbaB aldolase family. ADHS subfamily. In terms of assembly, homodecamer.

It carries out the reaction 1-deoxy-D-threo-hexo-2,5-diulose 6-phosphate + L-aspartate 4-semialdehyde = 2,3-dioxopropyl phosphate + 2-amino-2,3,7-trideoxy-D-lyxo-hept-6-ulosonate. In terms of biological role, catalyzes a transaldol reaction between 6-deoxy-5-ketofructose 1-phosphate (DKFP) and L-aspartate semialdehyde (ASA) with an elimination of hydroxypyruvaldehyde phosphate to yield 2-amino-3,7-dideoxy-D-threo-hept-6-ulosonate (ADH). Plays a key role in an alternative pathway of the biosynthesis of 3-dehydroquinate (DHQ), which is involved in the canonical pathway for the biosynthesis of aromatic amino acids. This Archaeoglobus fulgidus (strain ATCC 49558 / DSM 4304 / JCM 9628 / NBRC 100126 / VC-16) protein is Putative 2-amino-3,7-dideoxy-D-threo-hept-6-ulosonate synthase 2.